Reading from the N-terminus, the 1122-residue chain is Histone deacetylase 5 (1122 aa).

The segment at Met-1–Arg-22 is disordered. Residue Lys-35 forms a Glycyl lysine isopeptide (Lys-Gly) (interchain with G-Cter in SUMO2) linkage. The tract at residues Lys-196–Leu-281 is disordered. Over residues Asp-247–Ala-258 the composition is skewed to basic and acidic residues. Ser-259 is modified (phosphoserine; by AMPK, CaMK1, SIK1 and PKD/PRKD1). Over residues Lys-272–Leu-281 the composition is skewed to basic and acidic residues. At Thr-292 the chain carries Phosphothreonine; by PKC. 2 disordered regions span residues Gly-302–Thr-343 and Met-481–Ser-504. The segment covering Asn-312–Ser-327 has biased composition (low complexity). The span at Thr-328–Asn-340 shows a compositional bias: polar residues. The segment covering Ser-494–Ser-504 has biased composition (low complexity). Ser-498 bears the Phosphoserine; by AMPK, CaMK1, SIK1 and PKD/PRKD1 mark. Residue Lys-533 is modified to N6-acetyllysine. Residues Thr-536–Gly-625 form a disordered region. Acidic residues predominate over residues Ser-581–Glu-621. Phosphoserine occurs at positions 611 and 661. The tract at residues Gly-684–Gln-1028 is histone deacetylase. Residues Cys-696, Cys-698, His-704, and Cys-781 each coordinate Zn(2+). The active site involves His-833. A Nuclear export signal motif is present at residues Glu-1081 to Leu-1122. Positions Glu-1097–Leu-1122 are disordered. Basic and acidic residues predominate over residues Ala-1104–Glu-1113. The residue at position 1108 (Ser-1108) is a Phosphoserine.

Belongs to the histone deacetylase family. HD type 2 subfamily. As to quaternary structure, interacts with AHRR, BAHD1, BCOR, HDAC7, HDAC9, CTBP1, MEF2C, NCOR2, NRIP1, PHB2 and a 14-3-3 chaperone protein. Interacts with BCL6, DDIT3/CHOP, GRK5, KDM5B and MYOCD. Interacts with EP300 in the presence of TFAP2C. Interacts with ANKRA2. Interacts with CUL7 (as part of the 3M complex); negatively regulated by ANKRA2. Interacts with ZBTB7B; the interaction allows the recruitment of HDAC4 on CD8 loci for deacetylation and possible inhibition of CD8 genes expression. Interacts with RARA. Post-translationally, phosphorylated by AMPK, CaMK1, SIK1 and PRKD1 at Ser-259 and Ser-498. The phosphorylation is required for the export to the cytoplasm and inhibition. Phosphorylated by the PKC kinases PKN1 and PKN2, impairing nuclear import. Phosphorylated by GRK5, leading to nuclear export of HDAC5 and allowing MEF2-mediated transcription. Ubiquitinated. Polyubiquitination however does not lead to its degradation.

The protein localises to the nucleus. The protein resides in the cytoplasm. The enzyme catalyses N(6)-acetyl-L-lysyl-[histone] + H2O = L-lysyl-[histone] + acetate. Its function is as follows. Responsible for the deacetylation of lysine residues on the N-terminal part of the core histones (H2A, H2B, H3 and H4). Histone deacetylation gives a tag for epigenetic repression and plays an important role in transcriptional regulation, cell cycle progression and developmental events. Histone deacetylases act via the formation of large multiprotein complexes. Involved in muscle maturation by repressing transcription of myocyte enhancer MEF2C. During muscle differentiation, it shuttles into the cytoplasm, allowing the expression of myocyte enhancer factors. Serves as a corepressor of RARA and causes its deacetylation. In association with RARA, plays a role in the repression of microRNA-10a and thereby in the inflammatory response. This Pongo abelii (Sumatran orangutan) protein is Histone deacetylase 5 (HDAC5).